A 448-amino-acid polypeptide reads, in one-letter code: Fibulin-5 (448 aa).

An N-terminal signal peptide occupies residues 1–23 (MPGIKRILTVTILALCLPSPGNA). Residues 42–82 (DIDECRTIPEACRGDMMCVNQNGGYLCIPRTNPVYRGPYSN) enclose the EGF-like 1; calcium-binding domain. 17 disulfides stabilise this stretch: C46–C59, C53–C68, C131–C144, C138–C153, C155–C166, C172–C181, C177–C190, C192–C205, C211–C221, C217–C230, C232–C245, C251–C262, C258–C271, C273–C286, C292–C305, C299–C314, and C320–C332. Positions 54-56 (RGD) match the Cell attachment site motif. The EGF-like 2; calcium-binding domain occupies 127 to 167 (DVDECATDSHQCNPTQICINTEGGYTCSCTDGYWLLEGQCL). One can recognise an EGF-like 3; calcium-binding domain in the interval 168 to 206 (DIDECRYGYCQQLCANVPGSYSCTCNPGFTLNEDGRSCQ). Residues 207 to 246 (DVNECATENPCVQTCVNTYGSFICRCDPGYELEEDGVHCS) enclose the EGF-like 4; calcium-binding domain. An interaction with LOXL1 region spans residues 245–448 (CSDMDECSFS…LRIYVSQYPF (204 aa)). An EGF-like 5; calcium-binding domain is found at 247 to 287 (DMDECSFSEFLCQHECVNQPGTYFCSCPPGYILLDDNRSCQ). N-linked (GlcNAc...) asparagine glycans are attached at residues N283 and N296. One can recognise an EGF-like 6; calcium-binding domain in the interval 288 to 333 (DINECEHRNHTCNLQQTCYNLQGGFKCIDPIRCEEPYLRISDNRCM).

This sequence belongs to the fibulin family. As to quaternary structure, homodimer. Monomer, homodimerizes in presence of Ca(2+). Interacts with ELN. Interacts (via N-terminus) with the integrins ITGAV/ITGB3, ITGAV/ITGB5 and ITGA9/ITGB1. Interacts with FBN1 (via N-terminal domain). Forms a ternary complex with ELN and FBN1. Interacts with EFEMP2 with moderate affinity. Interacts with LOXL1. In terms of processing, N-glycosylated. As to expression, expressed in skin fibroblasts (at protein level). Expressed predominantly in heart, ovary, and colon but also in kidney, pancreas, testis, lung and placenta. Not detectable in brain, liver, thymus, prostate, or peripheral blood leukocytes.

The protein localises to the secreted. The protein resides in the extracellular space. Its subcellular location is the extracellular matrix. In terms of biological role, essential for elastic fiber formation, is involved in the assembly of continuous elastin (ELN) polymer and promotes the interaction of microfibrils and ELN. Stabilizes and organizes elastic fibers in the skin, lung and vasculature. Promotes adhesion of endothelial cells through interaction of integrins and the RGD motif. Vascular ligand for integrin receptors which may play a role in vascular development and remodeling. May act as an adapter that mediates the interaction between FBN1 and ELN. This Homo sapiens (Human) protein is Fibulin-5 (FBLN5).